The primary structure comprises 66 residues: Large ribosomal subunit protein uL29 (66 aa).

The protein belongs to the universal ribosomal protein uL29 family.

The chain is Large ribosomal subunit protein uL29 from Helicobacter pylori (strain P12).